Here is a 483-residue protein sequence, read N- to C-terminus: MKSAIPSLMVQGTTSDAGKSVLVAGLCRVLARKGINVAPFKPQNMALNSAVTKDGGEIGRAQAVQAQACNIEPTVHMNPVLIKPNSDTGAQIILQGKALSNMDAASFHDYKKVAMNTVLDSFSKLTKEFDSIMIEGAGSPAEINLREGDIANMGFAEAADVPVIIVADIDRGGVFAHLYGTLALLSESEQTRVKGFVINRFRGDIRLLQSGLDWLEEKTGKPVLGVLPYLHGLNLEAEDAITAQQELNSEVKLNVVVPVLTRISNHTDFDVLRLNPDINLSYVGKGEKIDKADLIILPGTKSVRDDLAYLKSQGWDKDILRHIRLGGKVMGICGGYQMLGKTIDDPDGVEGEPGSSEGLGLLNVHTVLTGSKQLTKTEAVLNLNNQKAKVKGYEIHVGRSQVLDEQPLELDNGECDGAISECGQIMGTYLHGFFDEAEALNLITEWVNGTQVKQQDFEVLKEQGINRIADAIEQHMNLDFLFK.

Residues 252 to 439 (KLNVVVPVLT…LHGFFDEAEA (188 aa)) enclose the GATase cobBQ-type domain. The active-site Nucleophile is cysteine 333. Residue histidine 431 is part of the active site.

The protein belongs to the CobB/CobQ family. CobQ subfamily.

It functions in the pathway cofactor biosynthesis; adenosylcobalamin biosynthesis. In terms of biological role, catalyzes amidations at positions B, D, E, and G on adenosylcobyrinic A,C-diamide. NH(2) groups are provided by glutamine, and one molecule of ATP is hydrogenolyzed for each amidation. This chain is Cobyric acid synthase, found in Vibrio parahaemolyticus serotype O3:K6 (strain RIMD 2210633).